The chain runs to 345 residues: uncharacterized protein (345 aa).

The protein belongs to the Gfo/Idh/MocA family. Biliverdin reductase subfamily.

This is an uncharacterized protein from Escherichia coli (strain K12).